The following is a 440-amino-acid chain: Ribosomal protein uS12 methylthiotransferase RimO (440 aa).

One can recognise an MTTase N-terminal domain in the interval 8-124 (TSVFLLSLGC…VLDALGARYH (117 aa)). The [4Fe-4S] cluster site is built by Cys-17, Cys-53, Cys-87, Cys-148, Cys-152, and Cys-155. Positions 134–363 (LTPPHSSYLK…MELQEEIARK (230 aa)) constitute a Radical SAM core domain. Positions 366–437 (EAFVGSLMTV…AYELHGTVES (72 aa)) constitute a TRAM domain.

It belongs to the methylthiotransferase family. RimO subfamily. The cofactor is [4Fe-4S] cluster.

Its subcellular location is the cytoplasm. It carries out the reaction L-aspartate(89)-[ribosomal protein uS12]-hydrogen + (sulfur carrier)-SH + AH2 + 2 S-adenosyl-L-methionine = 3-methylsulfanyl-L-aspartate(89)-[ribosomal protein uS12]-hydrogen + (sulfur carrier)-H + 5'-deoxyadenosine + L-methionine + A + S-adenosyl-L-homocysteine + 2 H(+). Catalyzes the methylthiolation of an aspartic acid residue of ribosomal protein uS12. The polypeptide is Ribosomal protein uS12 methylthiotransferase RimO (Chlorobium luteolum (strain DSM 273 / BCRC 81028 / 2530) (Pelodictyon luteolum)).